The sequence spans 233 residues: NAD-dependent protein deacylase (233 aa).

The Deacetylase sirtuin-type domain occupies 1-230 (MKNIMILSGA…ALDIENFMKD (230 aa)). 9–28 (GAGLSAPSGLKTFRDNDGLW) serves as a coordination point for NAD(+). Positions 53 and 56 each coordinate substrate. NAD(+) is bound at residue 88-91 (QNVD). The Proton acceptor role is filled by His106. Zn(2+)-binding residues include Cys114, Cys117, Cys133, and Cys136. NAD(+) contacts are provided by residues 172–174 (GTS) and Ile213.

It belongs to the sirtuin family. Class III subfamily. Zn(2+) serves as cofactor.

It localises to the cytoplasm. It carries out the reaction N(6)-acetyl-L-lysyl-[protein] + NAD(+) + H2O = 2''-O-acetyl-ADP-D-ribose + nicotinamide + L-lysyl-[protein]. The catalysed reaction is N(6)-succinyl-L-lysyl-[protein] + NAD(+) + H2O = 2''-O-succinyl-ADP-D-ribose + nicotinamide + L-lysyl-[protein]. NAD-dependent lysine deacetylase and desuccinylase that specifically removes acetyl and succinyl groups on target proteins. Modulates the activities of several proteins which are inactive in their acylated form. The chain is NAD-dependent protein deacylase from Campylobacter jejuni (strain RM1221).